A 436-amino-acid chain; its full sequence is Enolase (436 aa).

Glutamine 167 contributes to the (2R)-2-phosphoglycerate binding site. The Proton donor role is filled by glutamate 209. Residues aspartate 246, glutamate 291, and aspartate 318 each coordinate Mg(2+). 4 residues coordinate (2R)-2-phosphoglycerate: lysine 343, arginine 372, serine 373, and lysine 394. Lysine 343 acts as the Proton acceptor in catalysis.

This sequence belongs to the enolase family. Component of the RNA degradosome, a multiprotein complex involved in RNA processing and mRNA degradation. Mg(2+) is required as a cofactor.

The protein resides in the cytoplasm. It localises to the secreted. The protein localises to the cell surface. The catalysed reaction is (2R)-2-phosphoglycerate = phosphoenolpyruvate + H2O. It functions in the pathway carbohydrate degradation; glycolysis; pyruvate from D-glyceraldehyde 3-phosphate: step 4/5. Functionally, catalyzes the reversible conversion of 2-phosphoglycerate (2-PG) into phosphoenolpyruvate (PEP). It is essential for the degradation of carbohydrates via glycolysis. The polypeptide is Enolase (Actinobacillus pleuropneumoniae serotype 5b (strain L20)).